The primary structure comprises 139 residues: Large ribosomal subunit protein bL17 (139 aa).

This sequence belongs to the bacterial ribosomal protein bL17 family. Part of the 50S ribosomal subunit. Contacts protein L32.

In Cereibacter sphaeroides (strain ATCC 17025 / ATH 2.4.3) (Rhodobacter sphaeroides), this protein is Large ribosomal subunit protein bL17.